Reading from the N-terminus, the 433-residue chain is Protein translocase subunit SecY (433 aa).

10 helical membrane-spanning segments follow: residues 17-37 (IIFT…PIAG), 71-91 (IFAL…LMSV), 117-137 (LTVL…ESIV), 141-161 (GPVV…TLVV), 184-204 (LIIF…MFEL), 212-232 (PLVA…IIFF), 268-288 (GVIP…LANF), 309-329 (IYIL…TAIV), 366-386 (LTVV…LLMN), and 388-408 (YVIS…VVLD).

The protein belongs to the SecY/SEC61-alpha family. Component of the Sec protein translocase complex. Heterotrimer consisting of SecY, SecE and SecG subunits. The heterotrimers can form oligomers, although 1 heterotrimer is thought to be able to translocate proteins. Interacts with the ribosome. Interacts with SecDF, and other proteins may be involved. Interacts with SecA.

Its subcellular location is the cell inner membrane. In terms of biological role, the central subunit of the protein translocation channel SecYEG. Consists of two halves formed by TMs 1-5 and 6-10. These two domains form a lateral gate at the front which open onto the bilayer between TMs 2 and 7, and are clamped together by SecE at the back. The channel is closed by both a pore ring composed of hydrophobic SecY resides and a short helix (helix 2A) on the extracellular side of the membrane which forms a plug. The plug probably moves laterally to allow the channel to open. The ring and the pore may move independently. The chain is Protein translocase subunit SecY from Rickettsia bellii (strain RML369-C).